The chain runs to 420 residues: Bicoumarin synthase ktnC (420 aa).

Residue cysteine 362 coordinates heme.

It belongs to the cytochrome P450 family. Heme is required as a cofactor.

The catalysed reaction is 2 7-demethylsiderin + NADPH + O2 = orlandin + NADP(+) + 2 H2O. It functions in the pathway secondary metabolite biosynthesis. Non-reducing polyketide synthase; part of the gene cluster that mediates the biosynthesis of the bicoumarin kotanin. The non-reducing polyketide synthase ktnS first catalyzes the formation of the pentaketidic 4,7-dihydroxy-5-methylcoumarin from acetyl coenzyme A and 4 malonyl coenzyme A molecules. Further O-methylation by ktnB leads to the formation of 7-demethylsiderin. Then, an oxidative phenol coupling catalyzed by the cytochrome P450 monooxygenase ktnC forms the 8,8'-dimer P-orlandin via dimerization the monomeric precursor, 7-demethylsiderin. P-orlandin is subsequently O-methylated in a stepwise fashion to demethylkotanin and kotanin. This is Bicoumarin synthase ktnC from Aspergillus niger (strain ATCC MYA-4892 / CBS 513.88 / FGSC A1513).